The primary structure comprises 177 residues: MNKIKQIIIVEGKTDTDKLKSIYGNDLKTIQTKGLSLNKKTLEMIEEFNNKMGVIIFTDPDGAGKKIRQTIIDYLDNKVLNAFIKKDDINKTSKKIGIAEASDDAIKKALDNLIIYDKNNVSLSWTDYINNDFYLKSNRIVICKYFNFDNNISSKTLFKWLNWMNVSIDDIKKIIGE.

Positions 5 to 99 constitute a Toprim domain; that stretch reads KQIIIVEGKT…NKTSKKIGIA (95 aa). Glu11, Asp59, and Asp61 together coordinate Mg(2+).

The protein belongs to the ribonuclease M5 family. It depends on Mg(2+) as a cofactor.

It localises to the cytoplasm. The catalysed reaction is Endonucleolytic cleavage of RNA, removing 21 and 42 nucleotides, respectively, from the 5'- and 3'-termini of a 5S-rRNA precursor.. Functionally, required for correct processing of both the 5' and 3' ends of 5S rRNA precursor. Cleaves both sides of a double-stranded region yielding mature 5S rRNA in one step. This Mycoplasma mycoides subsp. mycoides SC (strain CCUG 32753 / NCTC 10114 / PG1) protein is Ribonuclease M5.